A 446-amino-acid chain; its full sequence is Adenylosuccinate synthetase 1 (446 aa).

GTP-binding positions include 20–26 (GDEGKGK) and 48–50 (GHT). Aspartate 21 acts as the Proton acceptor in catalysis. Mg(2+) contacts are provided by aspartate 21 and glycine 48. IMP is bound by residues 21 to 24 (DEGK), 46 to 49 (NAGH), threonine 137, arginine 151, glutamine 232, threonine 247, and arginine 319. Histidine 49 acts as the Proton donor in catalysis. Substrate is bound at residue 315–321 (SVTGRPR). GTP contacts are provided by residues arginine 321, 347 to 349 (KLD), and 429 to 431 (STG).

Belongs to the adenylosuccinate synthetase family. Homodimer. Mg(2+) serves as cofactor.

It localises to the cytoplasm. The catalysed reaction is IMP + L-aspartate + GTP = N(6)-(1,2-dicarboxyethyl)-AMP + GDP + phosphate + 2 H(+). The protein operates within purine metabolism; AMP biosynthesis via de novo pathway; AMP from IMP: step 1/2. Its function is as follows. Plays an important role in the de novo pathway of purine nucleotide biosynthesis. Catalyzes the first committed step in the biosynthesis of AMP from IMP. The sequence is that of Adenylosuccinate synthetase 1 from Cupriavidus pinatubonensis (strain JMP 134 / LMG 1197) (Cupriavidus necator (strain JMP 134)).